The chain runs to 448 residues: Deoxyguanosinetriphosphate triphosphohydrolase-like protein (448 aa).

An HD domain is found at 67–260 (RLTHSLEVSQ…MELADDIAYG (194 aa)).

The protein belongs to the dGTPase family. Type 2 subfamily.

This is Deoxyguanosinetriphosphate triphosphohydrolase-like protein from Aliivibrio salmonicida (strain LFI1238) (Vibrio salmonicida (strain LFI1238)).